Reading from the N-terminus, the 60-residue chain is Cytotoxin 1 (60 aa).

Disulfide bonds link Cys3/Cys21, Cys14/Cys38, Cys42/Cys53, and Cys54/Cys59.

Belongs to the three-finger toxin family. Short-chain subfamily. Type IA cytotoxin sub-subfamily. As to quaternary structure, monomer in solution; Homodimer and oligomer in the presence of negatively charged lipids forming a pore with a size ranging between 20 and 30 Angstroms. In terms of tissue distribution, expressed by the venom gland.

The protein resides in the secreted. It localises to the target cell membrane. Its function is as follows. Produces complete blockade of auricular contraction, which is irreversible at high concentrations. Induces apoptosis in leukemic cells. Possesses anti-arthritic and anti-inflammatory potential. The polypeptide is Cytotoxin 1 (Naja kaouthia (Monocled cobra)).